Consider the following 920-residue polypeptide: Urea transporter 2 (920 aa).

The segment at 25 to 57 (FTSPSWPSTSPDTHPALPLLEMPEEKDLRSSNE) is disordered. Residues 26–39 (TSPSWPSTSPDTHP) are compositionally biased toward low complexity. Residues 47 to 57 (PEEKDLRSSNE) are compositionally biased toward basic and acidic residues. A run of 9 helical transmembrane segments spans residues 151–170 (WWTITGGLGTVVSTLTALAL), 176–196 (AIASGLHGYNGMLVGLLMAVF), 204–224 (WWLLFPVTFTAMSCPVLSSAL), 233–253 (LPVFTLPFNIAVTLYLAATGH), 272–291 (ITWTEMEMPLLLQAIPVGVG), 302–322 (GGVFLVALFISSPLICLHAAI), 346–366 (WSYNCVLSCIAIGGMFYALTW), 370–390 (LLALICALFCAYMEAAISNIM), and 392–412 (VVGVPPGTWAFCLATIIFLLL). The disordered stretch occupies residues 446-467 (EKAPSGGGGEHPPTAGPKVEEG). Serine 477 carries the phosphoserine modification. The next 4 membrane-spanning stretches (helical) occupy residues 600–620 (GILIILGLFIQNPWWAISGCL), 638–658 (AIAAGFHGYNGVLVGLLMAVF), 666–686 (WWLLLPVIIMSMSCPILSSAL), and 695–715 (LPVFTLPFNITVTLYLAATGH). Asparagine 733 carries N-linked (GlcNAc...) asparagine glycosylation. Helical transmembrane passes span 764–784 (GGIFLIALFISSPLICLHAAI), 803–823 (IYFGLCGFNSTLACIAIGGMF), 832–852 (LLAIACALFAAYLGAALANML), and 854–874 (VFGLPPCTWPFCLSALTFLLL).

It belongs to the urea transporter family. As to quaternary structure, interacts with SNAPIN which enhances its urea transport activity. Epressed in the inner medulla of the kidney (at protein level). As to expression, expressed in the kidney.

The protein resides in the apical cell membrane. It localises to the cell membrane. It carries out the reaction urea(in) = urea(out). Its activity is regulated as follows. Inhibited by phloretin. Its function is as follows. Mediates the transport of urea driven by a concentration gradient across the cell membrane of the renal inner medullary collecting duct which is critical to the urinary concentrating mechanism. In terms of biological role, mediates the transport of urea driven by a concentration gradient across the cell membrane of the kidney inner medullary collecting duct which is critical to the urinary concentrating mechanism. The sequence is that of Urea transporter 2 (SLC14A2) from Homo sapiens (Human).